A 101-amino-acid chain; its full sequence is NAD(P)H-quinone oxidoreductase subunit 4L, chloroplastic (101 aa).

3 consecutive transmembrane segments (helical) span residues 2–22 (MLEHVLVLSAYLFSIGIYGLI), 32–52 (MCLELILNAVNINFVTFSDFF), and 61–81 (IFSIFVIAIAAAEAAIGPAIV).

This sequence belongs to the complex I subunit 4L family. As to quaternary structure, NDH is composed of at least 16 different subunits, 5 of which are encoded in the nucleus.

The protein localises to the plastid. Its subcellular location is the chloroplast thylakoid membrane. The catalysed reaction is a plastoquinone + NADH + (n+1) H(+)(in) = a plastoquinol + NAD(+) + n H(+)(out). It carries out the reaction a plastoquinone + NADPH + (n+1) H(+)(in) = a plastoquinol + NADP(+) + n H(+)(out). Functionally, NDH shuttles electrons from NAD(P)H:plastoquinone, via FMN and iron-sulfur (Fe-S) centers, to quinones in the photosynthetic chain and possibly in a chloroplast respiratory chain. The immediate electron acceptor for the enzyme in this species is believed to be plastoquinone. Couples the redox reaction to proton translocation, and thus conserves the redox energy in a proton gradient. The sequence is that of NAD(P)H-quinone oxidoreductase subunit 4L, chloroplastic from Vitis vinifera (Grape).